We begin with the raw amino-acid sequence, 579 residues long: Altered inheritance of mitochondria protein 9, mitochondrial (579 aa).

Residues 1-36 (MQSWNSQSFLSSHFTMLRYACKRAVPRLNAASGLRF) constitute a mitochondrion transit peptide.

The protein belongs to the AIM9 family.

It is found in the mitochondrion. The protein is Altered inheritance of mitochondria protein 9, mitochondrial (AIM9) of Yarrowia lipolytica (strain CLIB 122 / E 150) (Yeast).